A 231-amino-acid chain; its full sequence is Dephospho-CoA kinase domain-containing protein (231 aa).

Positions 3 to 207 (LVGLTGGIAS…RSMEYLPLRL (205 aa)) constitute a DPCK domain. Residue 8–15 (GGIASGKS) participates in ATP binding.

The protein belongs to the CoaE family.

The polypeptide is Dephospho-CoA kinase domain-containing protein (Dcakd) (Mus musculus (Mouse)).